Consider the following 388-residue polypeptide: Cell adhesion molecule 4 (388 aa).

Residues 1–20 form the signal peptide; that stretch reads MGRARRFQWPLLLLWAAAAG. An Ig-like V-type domain is found at 21 to 119; sequence PGTGQEVQTE…DTHHQIATLT (99 aa). Residues 25–324 lie on the Extracellular side of the membrane; that stretch reads QEVQTENVTV…VEAQTSVPYA (300 aa). 2 N-linked (GlcNAc...) asparagine glycosylation sites follow: Asn31 and Asn67. Cystine bridges form between Cys44/Cys104, Cys145/Cys199, and Cys245/Cys291. 2 consecutive Ig-like C2-type domains span residues 124-219 and 224-307; these read PENP…YVLD and PTAR…YVLV. An N-linked (GlcNAc...) asparagine glycan is attached at Asn286. The helical transmembrane segment at 325 to 345 threads the bilayer; that stretch reads IVGGILALLVFLIICVLVGMV. The Cytoplasmic portion of the chain corresponds to 346 to 388; the sequence is WCSVRQKGSYLTHEASGLDEQGEAREAFLNGGDGHKRKEEFFI. At Ser361 the chain carries Phosphoserine.

This sequence belongs to the nectin family. In terms of assembly, monomer and homodimer. N-glycosylated. As to expression, expressed in the brain and several organs including the kidney and liver.

It is found in the membrane. Involved in the cell-cell adhesion. Has calcium- and magnesium-independent cell-cell adhesion activity. May have tumor-suppressor activity. The protein is Cell adhesion molecule 4 (Cadm4) of Mus musculus (Mouse).